The following is a 982-amino-acid chain: MADRSARRARPGDDSVGQFVIGAEIGKGSFAQVYMGKHKVSGAAVAIKSVELARLNKKLKENLYGEINILKTLRHPHIVALHDCVESATHINLMMEYCELGDLSLFIKKREKLSTNPATHDMARKYPNVPNSGLNEVVIRHFLKQLSSALKFLRESNLVHRDVKPQNLLLLPSPEFREVNKLARPILTASQDSLVPVAGLASLPMLKLADFGFARVLPSTSLAETLCGSPLYMAPEILRYERYDAKADLWSVGTVLFEMIVGRPPFRASNHVELLRKIEAAEDVIKFPRETTISSEMKGLTRALLKRNPVERISFENFFAHPVIISSIPGLVEDDIPKPEASEQRSSSKDTRAASKSDDPIASPRKYSFRRHPTDNDQIRDQFRRVEPPSSAAESAPSRQTSAFSGIAAEARKQAAAEASARTGQSSRNEPGDNLVPRRPQAQPSTSAPSKPGLYEERRRGISNASLNRSNRESSSPTSAALANDSARAPPQQTSRRVQAEEREKAAQDVAFERDYVVVEKKHVEVNAFADEMAANPRLGGQGTPLSPKSGQIVRRATQQGNPTSTTGAIPAAPSRTMQIAQGTQRHYHERGTSLSASPGSTASFITKAIQDASLRLLGIKYPAGLTKGASPPELYNPYPAYPTPSPPVGLISSGKQSTPVDEDARVAQLIEEHATRSDVVYGFAEVKYKQLVPLAPSAEHGLGGTTLEDMPTGEEDVLTVEAIVSLSEEALVLYVKALTLLAKSMDIASLWWARKNRGDQANNALSSTRDSVNTQTLSLRINSAVQWVRSRFNEVLEKAEVVRLRLMDAQKRLPDDHPSHPSNHPQGSESVNGASAEGVFLTVGVTAEKLMYDRALEMSRTAAINEITNEDLAGCEISYVTAIRMLEAVLDNDEDAPKRRLSANMDDSGGDGEDGHAEINADDQQAVQKMIHMIRSRLTSVRSKVRMISNASKAQQQSQPQSLIRRRSGDVTPRSVPSYSS.

The Protein kinase domain occupies 19-324 (FVIGAEIGKG…FENFFAHPVI (306 aa)). ATP is bound by residues 25–33 (IGKGSFAQV) and K48. Residue D162 is the Proton acceptor of the active site. 4 disordered regions span residues 334-506 (DDIP…REKA), 813-834 (RLPD…SVNG), 898-918 (PKRR…DGHA), and 947-982 (RMIS…SYSS). Composition is skewed to basic and acidic residues over residues 335 to 359 (DIPK…KSDD) and 372 to 387 (HPTD…RRVE). The span at 388 to 398 (PPSSAAESAPS) shows a compositional bias: low complexity. Positions 463–481 (SNASLNRSNRESSSPTSAA) are enriched in polar residues.

This sequence belongs to the protein kinase superfamily. Ser/Thr protein kinase family. APG1/unc-51/ULK1 subfamily. As to quaternary structure, homodimer. Forms a ternary complex with ATG13 and ATG17. As to expression, uniformly detected in conidia, mycelia and appressoria (at protein level).

The protein resides in the cytoplasm. It localises to the preautophagosomal structure membrane. It catalyses the reaction L-seryl-[protein] + ATP = O-phospho-L-seryl-[protein] + ADP + H(+). The catalysed reaction is L-threonyl-[protein] + ATP = O-phospho-L-threonyl-[protein] + ADP + H(+). Functionally, serine/threonine protein kinase involved in the cytoplasm to vacuole transport (Cvt) and found to be essential in autophagy, where it is required for the formation of autophagosomes. Involved in the clearance of protein aggregates which cannot be efficiently cleared by the proteasome. Required for selective autophagic degradation of the nucleus (nucleophagy) as well as for mitophagy which contributes to regulate mitochondrial quantity and quality by eliminating the mitochondria to a basal level to fulfill cellular energy requirements and preventing excess ROS production. Also involved in endoplasmic reticulum-specific autophagic process, in selective removal of ER-associated degradation (ERAD) substrates. Plays a key role in ATG9 and ATG23 cycling through the pre-autophagosomal structure and is necessary to promote ATG18 binding to ATG9 through phosphorylation of ATG9. Catalyzes phosphorylation of ATG4, decreasing the interaction between ATG4 and ATG8 and impairing deconjugation of PE-conjugated forms of ATG8. Autophagy is essential to fungal development, production of appressorium turgor, and pathogenicity in rice blast disease. This Pyricularia oryzae (strain 70-15 / ATCC MYA-4617 / FGSC 8958) (Rice blast fungus) protein is Serine/threonine-protein kinase ATG1.